Reading from the N-terminus, the 402-residue chain is Oxysterol-binding protein 8 (402 aa).

Residues 328 to 361 (DRIALEEGNLDVAAKEKHNLEEKQREDKRQRVAE) are a coiled coil.

Belongs to the OSBP family.

This Dictyostelium discoideum (Social amoeba) protein is Oxysterol-binding protein 8 (osbH).